We begin with the raw amino-acid sequence, 511 residues long: Trigger factor (511 aa).

The 86-residue stretch at 168–253 folds into the PPIase FKBP-type domain; the sequence is GDLLTIDFVG…VKEVKAPAEV (86 aa). Residues 446–511 are disordered; the sequence is DEHEHHHHDH…KAPAKKKKED (66 aa). Basic and acidic residues predominate over residues 455-478; it reads HDHDHDHDHDHDHGHDHDHGDEKP. Over residues 479-488 the composition is skewed to basic residues; it reads KKKPAAKKAA. Basic and acidic residues predominate over residues 489-498; sequence AKSDDGEAKP. Positions 499-511 are enriched in basic residues; it reads AAKKAPAKKKKED.

Belongs to the FKBP-type PPIase family. Tig subfamily.

The protein resides in the cytoplasm. The enzyme catalyses [protein]-peptidylproline (omega=180) = [protein]-peptidylproline (omega=0). In terms of biological role, involved in protein export. Acts as a chaperone by maintaining the newly synthesized protein in an open conformation. Functions as a peptidyl-prolyl cis-trans isomerase. This Parvibaculum lavamentivorans (strain DS-1 / DSM 13023 / NCIMB 13966) protein is Trigger factor.